The primary structure comprises 271 residues: ATP synthase subunit a (271 aa).

The next 5 membrane-spanning stretches (helical) occupy residues 38–58 (FWTL…LFLA), 100–120 (LIAP…LMDL), 146–166 (DVNI…FYSI), 220–240 (LIFI…LNVP), and 242–262 (AIFH…LTIV).

The protein belongs to the ATPase A chain family. In terms of assembly, F-type ATPases have 2 components, CF(1) - the catalytic core - and CF(0) - the membrane proton channel. CF(1) has five subunits: alpha(3), beta(3), gamma(1), delta(1), epsilon(1). CF(0) has three main subunits: a(1), b(2) and c(9-12). The alpha and beta chains form an alternating ring which encloses part of the gamma chain. CF(1) is attached to CF(0) by a central stalk formed by the gamma and epsilon chains, while a peripheral stalk is formed by the delta and b chains.

It localises to the cell inner membrane. Key component of the proton channel; it plays a direct role in the translocation of protons across the membrane. The polypeptide is ATP synthase subunit a (Enterobacter sp. (strain 638)).